The sequence spans 276 residues: Ribosomal RNA small subunit methyltransferase A (276 aa).

S-adenosyl-L-methionine-binding residues include asparagine 27, leucine 29, glycine 54, glutamate 75, aspartate 101, and asparagine 123.

This sequence belongs to the class I-like SAM-binding methyltransferase superfamily. rRNA adenine N(6)-methyltransferase family. RsmA subfamily.

Its subcellular location is the cytoplasm. It carries out the reaction adenosine(1518)/adenosine(1519) in 16S rRNA + 4 S-adenosyl-L-methionine = N(6)-dimethyladenosine(1518)/N(6)-dimethyladenosine(1519) in 16S rRNA + 4 S-adenosyl-L-homocysteine + 4 H(+). Its function is as follows. Specifically dimethylates two adjacent adenosines (A1518 and A1519) in the loop of a conserved hairpin near the 3'-end of 16S rRNA in the 30S particle. May play a critical role in biogenesis of 30S subunits. The sequence is that of Ribosomal RNA small subunit methyltransferase A from Bartonella quintana (strain Toulouse) (Rochalimaea quintana).